A 187-amino-acid chain; its full sequence is Large ribosomal subunit protein uL5 (187 aa).

This sequence belongs to the universal ribosomal protein uL5 family. Part of the 50S ribosomal subunit; part of the 5S rRNA/L5/L18/L25 subcomplex. Contacts the 5S rRNA and the P site tRNA. Forms a bridge to the 30S subunit in the 70S ribosome.

In terms of biological role, this is one of the proteins that bind and probably mediate the attachment of the 5S RNA into the large ribosomal subunit, where it forms part of the central protuberance. In the 70S ribosome it contacts protein S13 of the 30S subunit (bridge B1b), connecting the 2 subunits; this bridge is implicated in subunit movement. Contacts the P site tRNA; the 5S rRNA and some of its associated proteins might help stabilize positioning of ribosome-bound tRNAs. In Mycobacterium leprae (strain Br4923), this protein is Large ribosomal subunit protein uL5.